A 197-amino-acid polypeptide reads, in one-letter code: TATA-box-binding protein (197 aa).

A run of 2 repeats spans residues 10-86 and 101-177.

This sequence belongs to the TBP family.

General factor that plays a role in the activation of archaeal genes transcribed by RNA polymerase. Binds specifically to the TATA box promoter element which lies close to the position of transcription initiation. This is TATA-box-binding protein from Pyrobaculum neutrophilum (strain DSM 2338 / JCM 9278 / NBRC 100436 / V24Sta) (Thermoproteus neutrophilus).